Reading from the N-terminus, the 764-residue chain is MYGFGRGNMFRNRSTRYRRRPRYRAENYHSYMLDLLENMNEEFGRNWWGTPESHQPDSGPSSLQVESVELYTRDNAREHNTFMYDLVDGTKPVLILRRGQPFSIAIRFKRNYNPQQDRLKLEIGFGQQPLITKGTLIMLPVSGSDTFTKDKTQWDVRLRQHDGAVITLEIQIPAAVAVGVWKMKIVSQLTSEEQPNVSAVTHECKNKTYILFNPWCKQDSVYMEDEQWRKEYVLSDVGKIFTGSFKQPVGRRWIFGQFTDSVLPACMLILERSGLDYTARSNPIKVVRAISAMVNNIDDEGVLEGRWQEPYDDGVAPWMWTGSSAILEKYLKTRGVPVKYGQCWVFAGVANTVSRALGIPSRTVTNYDSAHDTDDTLTIDKWFDKNGDKIEDATSDSIWNFHVWNDCWMARPDLPTGYGGWQAYDSTPQETSEGVYQTGPASVLAVQRGEIGYMFDSPFVFSEVNADVVHWQEDDSSETGYKKLKIDSYRVGRLLLTKKIGVDDDFGDADAEDITDQYKNKEGTDEERMSVLNAARSSGFNYAFNLPSPEKEDVYFNLLDIEKIKIGQPFHVTVNIENQSSETRRVSAVLSASSIYYTGITGRKIKRENGNFSLQPHQKEVLSIEVTPDEYLEKLVDYAMIKLYAIATVKETQQTWSEEDDFMVEKPNLELEIRGNLQVGTAFVLAISLTNPLKRVLDNCFFTIEAPGVTGAFRVTNRDIQPEEVAVHTVRLIPQKPGPRKIVATFSSRQLIQVVGSKQVEVLD.

Active-site residues include Cys-343, His-402, and Asp-425. The Ca(2+) site is built by Asn-465, Asp-467, Glu-522, and Glu-527.

The protein belongs to the transglutaminase superfamily. Transglutaminase family. It depends on Ca(2+) as a cofactor. Mainly expressed in hemocytes, hepatopancreas, and gastric tissues. On the other hand nothing was detected in the heart, intestine and muscle.

The protein resides in the membrane. It catalyses the reaction L-glutaminyl-[protein] + L-lysyl-[protein] = [protein]-L-lysyl-N(6)-5-L-glutamyl-[protein] + NH4(+). Functionally, catalyzes the cross-linking of proteins and the conjugation of polyamines to proteins. In Tachypleus tridentatus (Japanese horseshoe crab), this protein is Hemocyte protein-glutamine gamma-glutamyltransferase.